The following is a 360-amino-acid chain: DNA primase large subunit PriL (360 aa).

Residues cysteine 237, cysteine 309, cysteine 318, and cysteine 325 each contribute to the [4Fe-4S] cluster site. Positions 340–360 (DDGDDDDLADWRDREDDDSPD) are disordered.

Belongs to the eukaryotic-type primase large subunit family. As to quaternary structure, heterodimer of a small subunit (PriS) and a large subunit (PriL). The cofactor is [4Fe-4S] cluster.

Its function is as follows. Regulatory subunit of DNA primase, an RNA polymerase that catalyzes the synthesis of short RNA molecules used as primers for DNA polymerase during DNA replication. Stabilizes and modulates the activity of the small subunit, increasing the rate of DNA synthesis, and conferring RNA synthesis capability. The DNA polymerase activity may enable DNA primase to also catalyze primer extension after primer synthesis. May also play a role in DNA repair. In Halobacterium salinarum (strain ATCC 29341 / DSM 671 / R1), this protein is DNA primase large subunit PriL.